The chain runs to 176 residues: Large ribosomal subunit protein uL6 (176 aa).

It belongs to the universal ribosomal protein uL6 family. As to quaternary structure, part of the 50S ribosomal subunit.

In terms of biological role, this protein binds to the 23S rRNA, and is important in its secondary structure. It is located near the subunit interface in the base of the L7/L12 stalk, and near the tRNA binding site of the peptidyltransferase center. The polypeptide is Large ribosomal subunit protein uL6 (Thiobacillus denitrificans (strain ATCC 25259 / T1)).